Consider the following 184-residue polypeptide: Serine recombinase PinE (184 aa).

One can recognise a Resolvase/invertase-type recombinase catalytic domain in the interval 1–134 (MLIGYVRVST…AGLETARAQG (134 aa)). The O-(5'-phospho-DNA)-serine intermediate role is filled by S9. The segment at residues 161–180 (RQKVAIIYDVGVSTLYKRFP) is a DNA-binding region (H-T-H motif).

It belongs to the site-specific recombinase resolvase family.

Functionally, this protein catalyzes the inversion of an 1800-bp E.coli DNA fragment, the P region, which can exist in either orientation. The function of the inversion is not yet clear. The sequence is that of Serine recombinase PinE (pinE) from Escherichia coli (strain K12).